The following is a 411-amino-acid chain: Dual-specificity RNA methyltransferase RlmN (411 aa).

The active-site Proton acceptor is Glu125. Residues 131–380 form the Radical SAM core domain; sequence EEGRGTLCIS…IRTPRGRDIL (250 aa). Cys138 and Cys383 are disulfide-bonded. [4Fe-4S] cluster-binding residues include Cys145, Cys149, and Cys152. S-adenosyl-L-methionine is bound by residues 209 to 210, Ser241, 263 to 265, and Asn340; these read GE and SLH. Cys383 functions as the S-methylcysteine intermediate in the catalytic mechanism.

Belongs to the radical SAM superfamily. RlmN family. [4Fe-4S] cluster serves as cofactor.

It localises to the cytoplasm. It carries out the reaction adenosine(2503) in 23S rRNA + 2 reduced [2Fe-2S]-[ferredoxin] + 2 S-adenosyl-L-methionine = 2-methyladenosine(2503) in 23S rRNA + 5'-deoxyadenosine + L-methionine + 2 oxidized [2Fe-2S]-[ferredoxin] + S-adenosyl-L-homocysteine. It catalyses the reaction adenosine(37) in tRNA + 2 reduced [2Fe-2S]-[ferredoxin] + 2 S-adenosyl-L-methionine = 2-methyladenosine(37) in tRNA + 5'-deoxyadenosine + L-methionine + 2 oxidized [2Fe-2S]-[ferredoxin] + S-adenosyl-L-homocysteine. Specifically methylates position 2 of adenine 2503 in 23S rRNA and position 2 of adenine 37 in tRNAs. m2A2503 modification seems to play a crucial role in the proofreading step occurring at the peptidyl transferase center and thus would serve to optimize ribosomal fidelity. The sequence is that of Dual-specificity RNA methyltransferase RlmN from Brucella suis biovar 1 (strain 1330).